We begin with the raw amino-acid sequence, 460 residues long: Probable carboxylesterase 11 (460 aa).

Polar residues-rich tracts occupy residues 26–35 (QSSGDESSSD) and 132–145 (NSYGYTTGSSSPEA). Disordered regions lie at residues 26-52 (QSSGDESSSDPFGVTTRPEESVAAPNP) and 132-161 (NSYGYTTGSSSPEAGSSDVYRGYAPSSSGG). The Involved in the stabilization of the negatively charged intermediate by the formation of the oxyanion hole motif lies at 173 to 175 (HGG). Active-site residues include serine 289, aspartate 392, and histidine 422.

The protein belongs to the 'GDXG' lipolytic enzyme family. In terms of tissue distribution, expressed in roots, leaves, stems, flowers and siliques.

It carries out the reaction a carboxylic ester + H2O = an alcohol + a carboxylate + H(+). Its function is as follows. Carboxylesterase acting on esters with varying acyl chain length. The protein is Probable carboxylesterase 11 (CXE11) of Arabidopsis thaliana (Mouse-ear cress).